A 93-amino-acid polypeptide reads, in one-letter code: Small ribosomal subunit protein uS19 (93 aa).

This sequence belongs to the universal ribosomal protein uS19 family.

Its function is as follows. Protein S19 forms a complex with S13 that binds strongly to the 16S ribosomal RNA. This chain is Small ribosomal subunit protein uS19, found in Nitratidesulfovibrio vulgaris (strain ATCC 29579 / DSM 644 / CCUG 34227 / NCIMB 8303 / VKM B-1760 / Hildenborough) (Desulfovibrio vulgaris).